The primary structure comprises 144 residues: Complexin-1 (144 aa).

A compositionally biased stretch (gly residues) spans 1-10 (MVSFLGGGLL). Residues 1–119 (MVSFLGGGLL…SGFPKNLDDL (119 aa)) form a disordered region. Composition is skewed to basic and acidic residues over residues 18–27 (LEEKEDKKEG) and 36–86 (AEAK…EGRL). Residues 29 to 67 (EEEDPEIAEAKREAEEKRNEKYRKMEEEREVMRQGIRDK) adopt a coiled-coil conformation. The span at 103–112 (LQSSAQSSGF) shows a compositional bias: polar residues. Cys-141 carries the cysteine methyl ester modification. The S-farnesyl cysteine moiety is linked to residue Cys-141. A propeptide spans 142 to 144 (NLQ) (removed in mature form).

Belongs to the complexin/synaphin family. Binds to the SNARE core complex containing SNAP25, synaptobrevin and syntaxin-1. Expressed in a subset of neurons in the central nervous system, including large serotoninergic Retzius neurons and pressure-sensitive P cells.

The protein localises to the membrane. Functionally, positively regulates a late step in synaptic vesicle exocytosis. The chain is Complexin-1 (cpx1) from Hirudo medicinalis (Medicinal leech).